The primary structure comprises 468 residues: 3-isopropylmalate dehydratase large subunit (468 aa).

[4Fe-4S] cluster-binding residues include cysteine 348, cysteine 409, and cysteine 412.

Belongs to the aconitase/IPM isomerase family. LeuC type 1 subfamily. As to quaternary structure, heterodimer of LeuC and LeuD. [4Fe-4S] cluster is required as a cofactor.

It carries out the reaction (2R,3S)-3-isopropylmalate = (2S)-2-isopropylmalate. It participates in amino-acid biosynthesis; L-leucine biosynthesis; L-leucine from 3-methyl-2-oxobutanoate: step 2/4. Functionally, catalyzes the isomerization between 2-isopropylmalate and 3-isopropylmalate, via the formation of 2-isopropylmaleate. This is 3-isopropylmalate dehydratase large subunit from Dechloromonas aromatica (strain RCB).